A 420-amino-acid chain; its full sequence is Calreticulin (420 aa).

Positions 1 to 18 (MKWGVVAVLATLVVAASA) are cleaved as a signal peptide. Cysteines 106 and 140 form a disulfide. 4 residues coordinate an alpha-D-glucoside: Y110, K112, Y131, and D138. Repeat copies occupy residues 194-205 (VASGSLYEDWDM), 213-224 (DPKASKPEDWDE), 230-241 (DPEDKKPEGWDD), 248-259 (DKDAKKPEDWDD), 263-273 (GTWEPPMIPNP), 277-287 (GEWKAKMIKNP), and 291-301 (GIWVAPDIDNP). The 4 X approximate repeats stretch occupies residues 194-259 (VASGSLYEDW…DAKKPEDWDD (66 aa)). The span at 210-220 (TIKDPKASKPE) shows a compositional bias: basic and acidic residues. Residues 210–272 (TIKDPKASKP…GTWEPPMIPN (63 aa)) are disordered. Over residues 221-230 (DWDEREEIAD) the composition is skewed to acidic residues. Residues 263-301 (GTWEPPMIPNPEYKGEWKAKMIKNPAYKGIWVAPDIDNP) are 3 X approximate repeats. An an alpha-D-glucoside-binding site is contributed by E321. Residues 357-376 (EEKAMFDKVKKEEDEKKAKD) show a composition bias toward basic and acidic residues. The tract at residues 357 to 420 (EEKAMFDKVK…EEEESGHDEL (64 aa)) is disordered. Acidic residues-rich tracts occupy residues 385–398 (EAAEEEDDEYEDKE) and 411–420 (EEEESGHDEL). Positions 417-420 (HDEL) match the Prevents secretion from ER motif.

The protein belongs to the calreticulin family.

The protein localises to the endoplasmic reticulum lumen. Molecular calcium-binding chaperone promoting folding, oligomeric assembly and quality control in the ER via the calreticulin/calnexin cycle. This lectin may interact transiently with almost all of the monoglucosylated glycoproteins that are synthesized in the ER. The polypeptide is Calreticulin (Chlamydomonas reinhardtii (Chlamydomonas smithii)).